The chain runs to 476 residues: Bifunctional protein HldE (476 aa).

The tract at residues 1–319 is ribokinase; the sequence is MKLTLPDYDQ…EAIYGSQDSG (319 aa). ATP is bound at residue 195–198; the sequence is NLSE. D264 is a catalytic residue. The interval 344-476 is cytidylyltransferase; the sequence is MTNGCFDILH…IIEAIRGGKG (133 aa).

This sequence in the N-terminal section; belongs to the carbohydrate kinase PfkB family. The protein in the C-terminal section; belongs to the cytidylyltransferase family. Homodimer.

The catalysed reaction is D-glycero-beta-D-manno-heptose 7-phosphate + ATP = D-glycero-beta-D-manno-heptose 1,7-bisphosphate + ADP + H(+). It catalyses the reaction D-glycero-beta-D-manno-heptose 1-phosphate + ATP + H(+) = ADP-D-glycero-beta-D-manno-heptose + diphosphate. Its pathway is nucleotide-sugar biosynthesis; ADP-L-glycero-beta-D-manno-heptose biosynthesis; ADP-L-glycero-beta-D-manno-heptose from D-glycero-beta-D-manno-heptose 7-phosphate: step 1/4. It participates in nucleotide-sugar biosynthesis; ADP-L-glycero-beta-D-manno-heptose biosynthesis; ADP-L-glycero-beta-D-manno-heptose from D-glycero-beta-D-manno-heptose 7-phosphate: step 3/4. In terms of biological role, catalyzes the phosphorylation of D-glycero-D-manno-heptose 7-phosphate at the C-1 position to selectively form D-glycero-beta-D-manno-heptose-1,7-bisphosphate. Its function is as follows. Catalyzes the ADP transfer from ATP to D-glycero-beta-D-manno-heptose 1-phosphate, yielding ADP-D-glycero-beta-D-manno-heptose. In Photobacterium profundum (strain SS9), this protein is Bifunctional protein HldE.